The following is a 117-amino-acid chain: 5-hydroxyisourate hydrolase (117 aa).

Residues H7, R45, and Y114 each contribute to the substrate site.

Belongs to the transthyretin family. 5-hydroxyisourate hydrolase subfamily. In terms of assembly, homotetramer.

The catalysed reaction is 5-hydroxyisourate + H2O = 5-hydroxy-2-oxo-4-ureido-2,5-dihydro-1H-imidazole-5-carboxylate + H(+). Catalyzes the hydrolysis of 5-hydroxyisourate (HIU) to 2-oxo-4-hydroxy-4-carboxy-5-ureidoimidazoline (OHCU). This is 5-hydroxyisourate hydrolase from Ralstonia nicotianae (strain ATCC BAA-1114 / GMI1000) (Ralstonia solanacearum).